Here is a 144-residue protein sequence, read N- to C-terminus: Large ribosomal subunit protein uL15 (144 aa).

The interval Met-1–Gln-54 is disordered. Gly residues predominate over residues Arg-21–Gly-31.

It belongs to the universal ribosomal protein uL15 family. In terms of assembly, part of the 50S ribosomal subunit.

Binds to the 23S rRNA. This is Large ribosomal subunit protein uL15 from Klebsiella pneumoniae (strain 342).